The primary structure comprises 466 residues: Asparagine--tRNA ligase (466 aa).

It belongs to the class-II aminoacyl-tRNA synthetase family. Homodimer.

It is found in the cytoplasm. The catalysed reaction is tRNA(Asn) + L-asparagine + ATP = L-asparaginyl-tRNA(Asn) + AMP + diphosphate + H(+). The sequence is that of Asparagine--tRNA ligase from Shewanella baltica (strain OS185).